The sequence spans 554 residues: Afadin- and alpha-actinin-binding protein A (554 aa).

Coiled-coil stretches lie at residues 122 to 287 (LEYL…SQRK) and 359 to 449 (ENGL…AIRL). The interval 508–528 (LASSGDYSRRPSKALPITSSS) is disordered.

This sequence belongs to the ADIP family. In terms of assembly, interacts with WRAP73.

It localises to the cell junction. It is found in the adherens junction. Its subcellular location is the cytoplasm. The protein localises to the cytoskeleton. The protein resides in the microtubule organizing center. It localises to the centrosome. It is found in the centriolar satellite. Belongs to an adhesion system, which plays a role in the organization of homotypic, interneuronal and heterotypic cell-cell adherens junctions (AJs). Involved in cell movement. Acts as a centrosome maturation factor, probably by maintaining the integrity of the pericentriolar material and proper microtubule nucleation at mitotic spindle poles. The function seems to implicate at least in part WRAP73; the SSX2IP:WRAP73 complex is proposed to act as regulator of spindle anchoring at the mitotic centrosome. The sequence is that of Afadin- and alpha-actinin-binding protein A (ssx2ip-a) from Xenopus laevis (African clawed frog).